The chain runs to 271 residues: S-adenosylmethionine decarboxylase proenzyme (271 aa).

S121 serves as the catalytic Schiff-base intermediate with substrate; via pyruvic acid. S121 is modified (pyruvic acid (Ser); by autocatalysis). The Proton acceptor; for processing activity role is filled by H126. C149 serves as the catalytic Proton donor; for catalytic activity.

This sequence belongs to the prokaryotic AdoMetDC family. Type 2 subfamily. As to quaternary structure, heterooctamer of four alpha and four beta chains arranged as a tetramer of alpha/beta heterodimers. Pyruvate serves as cofactor. Post-translationally, is synthesized initially as an inactive proenzyme. Formation of the active enzyme involves a self-maturation process in which the active site pyruvoyl group is generated from an internal serine residue via an autocatalytic post-translational modification. Two non-identical subunits are generated from the proenzyme in this reaction, and the pyruvate is formed at the N-terminus of the alpha chain, which is derived from the carboxyl end of the proenzyme. The post-translation cleavage follows an unusual pathway, termed non-hydrolytic serinolysis, in which the side chain hydroxyl group of the serine supplies its oxygen atom to form the C-terminus of the beta chain, while the remainder of the serine residue undergoes an oxidative deamination to produce ammonia and the pyruvoyl group blocking the N-terminus of the alpha chain.

It catalyses the reaction S-adenosyl-L-methionine + H(+) = S-adenosyl 3-(methylsulfanyl)propylamine + CO2. It participates in amine and polyamine biosynthesis; S-adenosylmethioninamine biosynthesis; S-adenosylmethioninamine from S-adenosyl-L-methionine: step 1/1. Functionally, catalyzes the decarboxylation of S-adenosylmethionine to S-adenosylmethioninamine (dcAdoMet), the propylamine donor required for the synthesis of the polyamines spermine and spermidine from the diamine putrescine. This Clostridium perfringens (strain SM101 / Type A) protein is S-adenosylmethionine decarboxylase proenzyme.